Here is a 319-residue protein sequence, read N- to C-terminus: Mitochondrial thiamine pyrophosphate carrier 1 (319 aa).

Solcar repeat units lie at residues G12–S110, P121–P207, and P214–I309. 6 consecutive transmembrane segments (helical) span residues V17–L35, L91–V107, F127–L147, G182–Y201, T221–L237, and G284–W301.

Belongs to the mitochondrial carrier (TC 2.A.29) family.

The protein localises to the mitochondrion inner membrane. Mitochondrial transporter that mediates uptake of thiamine pyrophosphate (ThPP) into mitochondria. In Coccidioides immitis (strain RS) (Valley fever fungus), this protein is Mitochondrial thiamine pyrophosphate carrier 1 (TPC1).